The chain runs to 122 residues: Photosystem II extrinsic protein U (122 aa).

Positions 1–30 (MRWLLSILVRVVLVLCLCFAPLGIPVVARA) are cleaved as a signal peptide.

Belongs to the PsbU family. In terms of assembly, PSII is composed of 1 copy each of membrane proteins PsbA, PsbB, PsbC, PsbD, PsbE, PsbF, PsbH, PsbI, PsbJ, PsbK, PsbL, PsbM, PsbT, PsbX, PsbY, PsbZ, Psb30/Ycf12, peripheral proteins PsbO, CyanoQ (PsbQ), PsbU, PsbV and a large number of cofactors. It forms dimeric complexes.

It is found in the cellular thylakoid membrane. Its function is as follows. One of the extrinsic, lumenal subunits of photosystem II (PSII). PSII is a light-driven water plastoquinone oxidoreductase, using light energy to abstract electrons from H(2)O, generating a proton gradient subsequently used for ATP formation. The extrinsic proteins stabilize the structure of photosystem II oxygen-evolving complex (OEC), the ion environment of oxygen evolution and protect the OEC against heat-induced inactivation. The chain is Photosystem II extrinsic protein U from Synechococcus sp. (strain JA-2-3B'a(2-13)) (Cyanobacteria bacterium Yellowstone B-Prime).